Reading from the N-terminus, the 477-residue chain is Salivary plasminogen activator alpha 2 (477 aa).

The first 36 residues, 1-36 (MVNTMKTKLLCVLLLCGAVFSLPRQETYRQLARGSR), serve as a signal peptide directing secretion. The region spanning 40-82 (VACRDEKTQMIYQQQESWLRPEVRSKRVEHCRCDRGLAQCHTV) is the Fibronectin type-I domain. Intrachain disulfides connect cysteine 42–cysteine 72, cysteine 70–cysteine 79, cysteine 87–cysteine 98, cysteine 92–cysteine 109, cysteine 111–cysteine 120, cysteine 128–cysteine 209, cysteine 149–cysteine 191, cysteine 180–cysteine 204, cysteine 214–cysteine 345, cysteine 257–cysteine 273, cysteine 265–cysteine 334, cysteine 359–cysteine 434, cysteine 391–cysteine 407, and cysteine 424–cysteine 452. The region spanning 83–121 (PVKSCSELRCFNGGTCWQAASFSDFVCQCPKGYTGKQCE) is the EGF-like domain. In terms of domain architecture, Kringle spans 128 to 209 (CYKDQGVTYR…ILEFCSVPVC (82 aa)). Residue asparagine 185 is glycosylated (N-linked (GlcNAc...) asparagine). The Peptidase S1 domain maps to 226–476 (STGGLFTDIT…YLGWIRDNMR (251 aa)). Residues histidine 272 and aspartate 321 each act as charge relay system in the active site. An N-linked (GlcNAc...) asparagine glycan is attached at asparagine 398. Serine 428 functions as the Charge relay system in the catalytic mechanism.

This sequence belongs to the peptidase S1 family. As to quaternary structure, monomer.

Its subcellular location is the secreted. It carries out the reaction Specific cleavage of Arg-|-Val bond in plasminogen to form plasmin.. Activity toward plasminogen is stimulated in the presence of fibrin I. In terms of biological role, probably essential to support the feeding habits of this exclusively haematophagous animal. Probable potent thrombolytic agent. The polypeptide is Salivary plasminogen activator alpha 2 (Desmodus rotundus (Vampire bat)).